We begin with the raw amino-acid sequence, 820 residues long: Ribosome biogenesis protein ERB1 (820 aa).

A disordered region spans residues 1 to 111 (MVRSRSNSVK…SDAGDDEVDP (111 aa)). Basic and acidic residues predominate over residues 9–19 (VKKDLKRKVDE). A compositionally biased stretch (acidic residues) spans 20–48 (PVDVQDEFDVEGLIDEGDSDDEDEAEQEV). Residues 53–64 (VTKDKKNTSKTE) show a composition bias toward basic and acidic residues. Positions 65–110 (NEEDADDESDSDAELEALIGEEEDLSGSELEDELAYFSDAGDDEVD) are enriched in acidic residues. The segment at 282-395 (RFIPSKHEAK…LRHVPGYSES (114 aa)) is required for interaction with NOP7. A required for interaction with YTM1 region spans residues 395 to 431 (SVRERFERSLDLYLAPRVRKNKLNIDPDSLIPDLPSP). 2 WD repeats span residues 447–486 (GHKG…ELYR) and 495–535 (AQDD…FDIE). The disordered stretch occupies residues 545-585 (GWGFAEGGREQQDIDTKGLDDDADSDSDDETGHVKKKSPPA). The span at 551-564 (GGREQQDIDTKGLD) shows a compositional bias: basic and acidic residues. WD repeat units lie at residues 604-646 (TATK…SQSP), 649-687 (KSKG…MAKK), 690-729 (PGAR…KPYK), 733-773 (YHEK…DMMT), and 789-820 (KSGL…LWTT).

Belongs to the WD repeat BOP1/ERB1 family. In terms of assembly, component of the NOP7 complex, composed of ERB1, NOP7 and YTM1. The complex is held together by ERB1, which interacts with NOP7 via its N-terminal domain and with YTM1 via a high-affinity interaction between the seven-bladed beta-propeller domains of the 2 proteins. The NOP7 complex associates with the 66S pre-ribosome.

It localises to the nucleus. The protein resides in the nucleolus. It is found in the nucleoplasm. Its function is as follows. Component of the NOP7 complex, which is required for maturation of the 25S and 5.8S ribosomal RNAs and formation of the 60S ribosome. The protein is Ribosome biogenesis protein ERB1 of Yarrowia lipolytica (strain CLIB 122 / E 150) (Yeast).